We begin with the raw amino-acid sequence, 374 residues long: Glyceraldehyde-3-phosphate dehydrogenase A, chloroplastic (374 aa).

The transit peptide at 1 to 34 (MAAMMQKSAFTGSAVSSKSGVRAKAARAVVDVRA) directs the protein to the chloroplast. NADP(+)-binding positions include 47 to 48 (RI), Asp-71, and Arg-116. An intrachain disulfide couples Cys-55 to Cys-325. D-glyceraldehyde 3-phosphate is bound by residues 189–191 (SCT), Thr-220, Arg-235, 248–249 (TG), and Arg-271. Cys-190 serves as the catalytic Nucleophile. Residue Asn-353 coordinates NADP(+).

The protein belongs to the glyceraldehyde-3-phosphate dehydrogenase family. In terms of assembly, homotetramer. Component of a complex that contains two dimers of PRK, two tetramers of GAPDH and CP12. CP12 associates with GAPDH, causing its conformation to change. This GAPDH/CP12 complex binds PRK to form a half-complex (one unit). This unit probably dimerizes due partially to interactions between the enzymes of each unit.

The protein resides in the plastid. It is found in the chloroplast. It catalyses the reaction D-glyceraldehyde 3-phosphate + phosphate + NADP(+) = (2R)-3-phospho-glyceroyl phosphate + NADPH + H(+). The protein operates within carbohydrate biosynthesis; Calvin cycle. The polypeptide is Glyceraldehyde-3-phosphate dehydrogenase A, chloroplastic (GAPA) (Chlamydomonas reinhardtii (Chlamydomonas smithii)).